Consider the following 1159-residue polypeptide: ATP-dependent helicase/deoxyribonuclease subunit B (1159 aa).

8 to 15 provides a ligand contact to ATP; it reads GRAGSGKT. Positions 784, 1102, 1105, and 1111 each coordinate [4Fe-4S] cluster. The interval 1140–1159 is disordered; it reads VKEDGSQVDGRTEGSDNNEG.

The protein belongs to the helicase family. AddB/RexB type 1 subfamily. Heterodimer of AddA and AddB. Mg(2+) serves as cofactor. Requires [4Fe-4S] cluster as cofactor.

In terms of biological role, the heterodimer acts as both an ATP-dependent DNA helicase and an ATP-dependent, dual-direction single-stranded exonuclease. Recognizes the chi site generating a DNA molecule suitable for the initiation of homologous recombination. The AddB subunit has 5' -&gt; 3' nuclease activity but not helicase activity. This is ATP-dependent helicase/deoxyribonuclease subunit B from Caldanaerobacter subterraneus subsp. tengcongensis (strain DSM 15242 / JCM 11007 / NBRC 100824 / MB4) (Thermoanaerobacter tengcongensis).